The chain runs to 479 residues: Sucrose-6-phosphate hydrolase (479 aa).

The disordered stretch occupies residues 1-28; sequence MTAHDQELRRRAYEEVEKKEPIANSDPH. Residues 40–43, Q59, 102–103, 161–162, and E220 each bind substrate; these read LLND, YS, and RD. The active site involves D43.

The protein belongs to the glycosyl hydrolase 32 family.

The catalysed reaction is Hydrolysis of terminal non-reducing beta-D-fructofuranoside residues in beta-D-fructofuranosides.. Its pathway is glycan biosynthesis; sucrose metabolism. This chain is Sucrose-6-phosphate hydrolase (sacA), found in Bacillus subtilis (strain 168).